Consider the following 177-residue polypeptide: Ribosome maturation factor RimP (177 aa).

This sequence belongs to the RimP family.

The protein resides in the cytoplasm. In terms of biological role, required for maturation of 30S ribosomal subunits. The chain is Ribosome maturation factor RimP from Mycobacterium marinum (strain ATCC BAA-535 / M).